The chain runs to 492 residues: 2-succinylbenzoate--CoA ligase (492 aa).

The protein belongs to the ATP-dependent AMP-binding enzyme family. MenE subfamily.

It carries out the reaction 2-succinylbenzoate + ATP + CoA = 2-succinylbenzoyl-CoA + AMP + diphosphate. Its pathway is quinol/quinone metabolism; 1,4-dihydroxy-2-naphthoate biosynthesis; 1,4-dihydroxy-2-naphthoate from chorismate: step 5/7. The protein operates within quinol/quinone metabolism; menaquinone biosynthesis. Functionally, converts 2-succinylbenzoate (OSB) to 2-succinylbenzoyl-CoA (OSB-CoA). The polypeptide is 2-succinylbenzoate--CoA ligase (Geobacillus sp. (strain WCH70)).